The chain runs to 294 residues: tRNA dimethylallyltransferase (294 aa).

An ATP-binding site is contributed by 10–17 (GPTAVGKT). 12-17 (TAVGKT) contacts substrate. The interaction with substrate tRNA stretch occupies residues 35-38 (DSQQ).

This sequence belongs to the IPP transferase family. As to quaternary structure, monomer. Mg(2+) is required as a cofactor.

It catalyses the reaction adenosine(37) in tRNA + dimethylallyl diphosphate = N(6)-dimethylallyladenosine(37) in tRNA + diphosphate. Its function is as follows. Catalyzes the transfer of a dimethylallyl group onto the adenine at position 37 in tRNAs that read codons beginning with uridine, leading to the formation of N6-(dimethylallyl)adenosine (i(6)A). This Streptococcus pneumoniae (strain P1031) protein is tRNA dimethylallyltransferase.